The primary structure comprises 377 residues: uncharacterized protein (377 aa).

The next 4 membrane-spanning stretches (helical) occupy residues 26 to 46 (TFQN…VVAI), 67 to 87 (TVGS…WVII), 108 to 128 (FLTF…ISLT), and 135 to 155 (IDYG…ALYI).

The protein resides in the cell membrane. This is an uncharacterized protein from Methanocaldococcus jannaschii (strain ATCC 43067 / DSM 2661 / JAL-1 / JCM 10045 / NBRC 100440) (Methanococcus jannaschii).